Consider the following 710-residue polypeptide: MLSLQYPDVYRDETAVQDYHGHKICDPYAWLEDPDSEQTKAFVEAQNKITVPFLEQCPIRGLYKERMTELYDYPKYSCHFKKGKRYFYFYNTGLQNQRVLYVQDSLEGEARVFLDPNILSDDGTVALRGYAFSEDGEYFAYGLSASGSDWVTIKFMKVDGAKELPDVLERVKFSCMAWTHDGKGMFYNSYPQQDGKSDGTETSTNLHQKLYYHVLGTDQSEDILCAEFPDEPKWMGGAELSDDGRYVLLSIREGCDPVNRLWYCDLQQESSGIAGILKWVKLIDNFEGEYDYVTNEGTVFTFKTNRQSPNYRVINIDFRDPEESKWKVLVPEHEKDVLEWIACVRSNFLVLCYLHDVKNILQLHDLTTGALLKTFPLDVGSIVGYSGQKKDTEIFYQFTSFLSPGIIYHCDLTKEELEPRVFREVTVKGIDASDYQTVQIFYPSKDGTKIPMFIVHKKGIKLDGSHPAFLYGYGGFNISITPNYSVSRLIFVRHMGGILAVANIRGGGEYGETWHKGGILANKQNCFDDFQCAAEYLIKEGYTSPKRLTINGGSNGGLLVAACANQRPDLFGCVIAQVGVMDMLKFHKYTIGHAWTTDYGCSDSKQHFEWLVKYSPLHNVKLPEADDIQYPSMLLLTADHDDRVVPLHSLKFIATLQYIVGRSRKQSNPLLIHVDTKAGHGAGKPTAKVIEEVSDMFAFIARCLNVDWIP.

Met1 carries the post-translational modification N-acetylmethionine. Lys157 is modified (N6-acetyllysine). Residues Ser554, Asp641, and His680 each act as charge relay system in the active site.

This sequence belongs to the peptidase S9A family. As to quaternary structure, monomer. The N-terminus is blocked.

The protein resides in the cytoplasm. The enzyme catalyses Hydrolysis of Pro-|-Xaa &gt;&gt; Ala-|-Xaa in oligopeptides.. Its function is as follows. Cleaves peptide bonds on the C-terminal side of prolyl residues within peptides that are up to approximately 30 amino acids long. This chain is Prolyl endopeptidase (PREP), found in Homo sapiens (Human).